The chain runs to 142 residues: MVLSAADKTNVKGIFAKIAGHAEEYGAEALDRMFTTYPQTKTYFPHFDVSHGSAQIKGHGKKVAAALVEAANHIDDIAGTLSKLSDLHAQKLRVDPVNFKLLGQCFLVVVAIHHPAALTPEVHASLDKFLCAVGTVLTAKYR.

In terms of domain architecture, Globin spans 2-142 (VLSAADKTNV…VGTVLTAKYR (141 aa)). Histidine 59 provides a ligand contact to O2. Heme b is bound at residue histidine 88.

This sequence belongs to the globin family. In terms of assembly, heterotetramer of two alpha chains and two beta chains. Red blood cells.

Its function is as follows. Involved in oxygen transport from the lung to the various peripheral tissues. The chain is Hemoglobin subunit alpha-A (HBAA) from Coturnix japonica (Japanese quail).